We begin with the raw amino-acid sequence, 252 residues long: Phosphate import ATP-binding protein PstB 1 (252 aa).

The region spanning 6–247 is the ABC transporter domain; sequence LQIRDLSVYY…PKRKETEDYI (242 aa). ATP is bound at residue 38 to 45; the sequence is GPSGSGKS.

The protein belongs to the ABC transporter superfamily. Phosphate importer (TC 3.A.1.7) family. The complex is composed of two ATP-binding proteins (PstB), two transmembrane proteins (PstC and PstA) and a solute-binding protein (PstS).

The protein localises to the cell membrane. The enzyme catalyses phosphate(out) + ATP + H2O = ADP + 2 phosphate(in) + H(+). Functionally, part of the ABC transporter complex PstSACB involved in phosphate import. Responsible for energy coupling to the transport system. The chain is Phosphate import ATP-binding protein PstB 1 from Streptococcus pyogenes serotype M1.